A 719-amino-acid chain; its full sequence is DNA polymerase epsilon subunit B (719 aa).

The interval 107–147 (SIPPKTKTYNNGGGKTTTIDRFLTKRPSPSDNDEGPLDQSI) is disordered.

The protein belongs to the DNA polymerase epsilon subunit B family. Heterotetramer. Consists of four subunits: POL2, DPB2, DPB3 and DPB4.

It is found in the nucleus. Its function is as follows. As accessory component of the DNA polymerase epsilon (DNA polymerase II) participates in chromosomal DNA replication. The chain is DNA polymerase epsilon subunit B (DPB2) from Candida glabrata (strain ATCC 2001 / BCRC 20586 / JCM 3761 / NBRC 0622 / NRRL Y-65 / CBS 138) (Yeast).